A 717-amino-acid polypeptide reads, in one-letter code: Trimethylamine N-oxide transport system permease protein TmoV (717 aa).

17 helical membrane-spanning segments follow: residues 10 to 30, 69 to 89, 120 to 140, 153 to 173, 175 to 195, 206 to 226, 238 to 258, 265 to 285, 319 to 339, 355 to 375, 402 to 422, 452 to 472, 488 to 508, 527 to 547, 574 to 594, 643 to 663, and 683 to 703; these read FFQW…IEVP, LPPL…FLMN, FMTF…ETIV, WAEL…ILGY, LSGK…SVFG, FILV…VMAF, ILLV…IVLF, AVII…LLGL, ILIG…ISAF, QLNI…AILL, ILFF…GSFY, IWDT…VDVL, LVLV…LVVG, LYMA…VGII, LIPV…AVIV, MLGL…GAFI, and GIGL…DHLI. Residues 200-379 enclose the ABC transmembrane type-1 1 domain; sequence SMQTLSFILV…LIAILLDKMS (180 aa). Positions 523-703 constitute an ABC transmembrane type-1 2 domain; sequence ALVTLYMATF…FIGLIFDHLI (181 aa).

This sequence belongs to the binding-protein-dependent transport system permease family. The complex is probably composed of two ATP-binding proteins (TmoW), two transmembrane proteins (TmoV) and a solute-binding protein (TmoX).

It is found in the cell inner membrane. Functionally, part of the ABC transporter complex TmoXWV involved in trimethylamine N-oxide (TMAO) import. Responsible for the translocation of the substrate across the membrane. The protein is Trimethylamine N-oxide transport system permease protein TmoV of Pelagibacter ubique (strain HTCC1062).